Reading from the N-terminus, the 572-residue chain is MALTISRAQYVATYGPTVGDKVRLGDTNLWATIEQDLLTKGDECKFGGGKSVRDGMAQSGTATRDNPNVLDFVITNVMIIDARLGIIKADIGIRDGRIVGIGQAGNPDTMDNVTPNMIIGASTEVHNGVHLIATAGGIDTHIHFICPQQAQHAIESGVTTLIGGGTGPADGTHATTCTPGAWYMEHMFQAAEALPVNVGFFGKGNCSTLDPLREQIEAGALGLKIHEDWGATPAVIDSALKVADEMDIQVAIHTDTLNESGFLEDTMKAIDGRVIHTFHTEGAGGGHAPDIIKAAMYSNVLPASTNPTRPFTKNTIDEHLDMLMVCHHLDKRVPEDVAFADSRIRPETIAAEDILHDMGVFSIMSSDSQAMGRIGEVVIRTWQTADKMKMQRGELGNEGNDNFRIKRYIAKYTINPAIAHGIAEHIGSLEVGKIADIVLWKPMFFGVKPEVVIKKGFISYAKMGDPNASIPTPQPVFYRPMYGAQGLATAQTAVFFVSQAAEKADIRAKFGLHKETIAVKGCRNVGKKDLVHNDVTPNITVDAERYEVRVDGELITCEPVDSVPLGQRYFLF.

One can recognise a Urease domain in the interval 136 to 572; the sequence is GGIDTHIHFI…VPLGQRYFLF (437 aa). Ni(2+) contacts are provided by His-141, His-143, and Lys-224. Residue Lys-224 is modified to N6-carboxylysine. Residue His-226 participates in substrate binding. Residues His-253 and His-279 each coordinate Ni(2+). The active-site Proton donor is the His-327. Ni(2+) is bound at residue Asp-367.

The protein belongs to the metallo-dependent hydrolases superfamily. Urease alpha subunit family. Heterotrimer of UreA (gamma), UreB (beta) and UreC (alpha) subunits. Three heterotrimers associate to form the active enzyme. Ni cation is required as a cofactor. Carboxylation allows a single lysine to coordinate two nickel ions.

The protein resides in the cytoplasm. The enzyme catalyses urea + 2 H2O + H(+) = hydrogencarbonate + 2 NH4(+). The protein operates within nitrogen metabolism; urea degradation; CO(2) and NH(3) from urea (urease route): step 1/1. This is Urease subunit alpha from Haemophilus influenzae (strain PittGG).